We begin with the raw amino-acid sequence, 385 residues long: MDPFRFQVEARAGRARVGRLFTPHGAVETPLFMPVGTAGSVKGLMPKDLEAIGSQVLLTNTYHLLLRPGPERVRALGGLHGFAGWKGPWLTDSGGFQVMSLGHMRRIDEEGVVFQSHLDGRLIKLTPERSIAVQEALGADLIMAFDECPPYPSPREYLEASLERTLRWLERSLKAKTRPDQALFGIAQGGTDPELRRRSTLETIRFDLPGYAIGGLAVGEPKEAMFAMVELSTRLLPEDRPRYLMGVGHPEDLVAAMGLGVDLFDCVYPTRTGRFGSALVPEGRLNLKNARFLEDRRPLEEGCDCYTCQTFGRAYLAHLVRAGEMLGGILLSLHNLRHLHRLTEAARQAIREGRYGDFAREFARRRFGREVPPWFREALAAGGHG.

The active-site Proton acceptor is Asp-92. Residues 92–96 (DSGGF), Asp-146, Gln-188, and Gly-215 contribute to the substrate site. The interval 246-252 (GVGHPED) is RNA binding. Catalysis depends on Asp-265, which acts as the Nucleophile. Residues 270 to 274 (TRTGR) are RNA binding; important for wobble base 34 recognition. Zn(2+) is bound by residues Cys-303, Cys-305, Cys-308, and His-334.

The protein belongs to the queuine tRNA-ribosyltransferase family. In terms of assembly, homodimer. Within each dimer, one monomer is responsible for RNA recognition and catalysis, while the other monomer binds to the replacement base PreQ1. Requires Zn(2+) as cofactor.

It carries out the reaction 7-aminomethyl-7-carbaguanine + guanosine(34) in tRNA = 7-aminomethyl-7-carbaguanosine(34) in tRNA + guanine. Its pathway is tRNA modification; tRNA-queuosine biosynthesis. Catalyzes the base-exchange of a guanine (G) residue with the queuine precursor 7-aminomethyl-7-deazaguanine (PreQ1) at position 34 (anticodon wobble position) in tRNAs with GU(N) anticodons (tRNA-Asp, -Asn, -His and -Tyr). Catalysis occurs through a double-displacement mechanism. The nucleophile active site attacks the C1' of nucleotide 34 to detach the guanine base from the RNA, forming a covalent enzyme-RNA intermediate. The proton acceptor active site deprotonates the incoming PreQ1, allowing a nucleophilic attack on the C1' of the ribose to form the product. After dissociation, two additional enzymatic reactions on the tRNA convert PreQ1 to queuine (Q), resulting in the hypermodified nucleoside queuosine (7-(((4,5-cis-dihydroxy-2-cyclopenten-1-yl)amino)methyl)-7-deazaguanosine). The chain is Queuine tRNA-ribosyltransferase from Thermus thermophilus (strain ATCC 27634 / DSM 579 / HB8).